A 353-amino-acid chain; its full sequence is Phosphate acyltransferase (353 aa).

Belongs to the PlsX family. Homodimer. Probably interacts with PlsY.

The protein resides in the cytoplasm. It carries out the reaction a fatty acyl-[ACP] + phosphate = an acyl phosphate + holo-[ACP]. It functions in the pathway lipid metabolism; phospholipid metabolism. Catalyzes the reversible formation of acyl-phosphate (acyl-PO(4)) from acyl-[acyl-carrier-protein] (acyl-ACP). This enzyme utilizes acyl-ACP as fatty acyl donor, but not acyl-CoA. The polypeptide is Phosphate acyltransferase (Rhodopseudomonas palustris (strain BisB5)).